Consider the following 377-residue polypeptide: Probable pectin lyase D (377 aa).

The N-terminal stretch at 1-17 (MRVSAFALLAAAATAAA) is a signal peptide. Disulfide bonds link C80-C99 and C89-C223. Residue N126 is glycosylated (N-linked (GlcNAc...) asparagine). R253 is a catalytic residue. A disulfide bridge connects residues C321 and C329.

This sequence belongs to the polysaccharide lyase 1 family.

The protein localises to the secreted. It carries out the reaction Eliminative cleavage of (1-&gt;4)-alpha-D-galacturonan methyl ester to give oligosaccharides with 4-deoxy-6-O-methyl-alpha-D-galact-4-enuronosyl groups at their non-reducing ends.. Functionally, pectinolytic enzymes consist of four classes of enzymes: pectin lyase, polygalacturonase, pectin methylesterase and rhamnogalacturonase. Among pectinolytic enzymes, pectin lyase is the most important in depolymerization of pectin, since it cleaves internal glycosidic bonds of highly methylated pectins. This Emericella nidulans (strain FGSC A4 / ATCC 38163 / CBS 112.46 / NRRL 194 / M139) (Aspergillus nidulans) protein is Probable pectin lyase D (pelD).